Reading from the N-terminus, the 302-residue chain is Nudix hydrolase 5 (302 aa).

Residues 122-254 enclose the Nudix hydrolase domain; the sequence is SHRIGIGAFV…EGNEMFKLIA (133 aa). Residues 159–180 carry the Nudix box motif; that stretch reads GTIKEGESIWAGAVREVKEETD. Positions 174 and 178 each coordinate Mg(2+).

It belongs to the Nudix hydrolase family. The cofactor is Mg(2+). Mn(2+) serves as cofactor. In terms of tissue distribution, expressed in roots, stems and leaves.

Functionally, probably mediates the hydrolysis of some nucleoside diphosphate derivatives. This chain is Nudix hydrolase 5 (NUDT5), found in Arabidopsis thaliana (Mouse-ear cress).